The following is a 185-amino-acid chain: Elongation factor P (185 aa).

The protein belongs to the elongation factor P family.

It localises to the cytoplasm. Its pathway is protein biosynthesis; polypeptide chain elongation. Functionally, involved in peptide bond synthesis. Stimulates efficient translation and peptide-bond synthesis on native or reconstituted 70S ribosomes in vitro. Probably functions indirectly by altering the affinity of the ribosome for aminoacyl-tRNA, thus increasing their reactivity as acceptors for peptidyl transferase. The chain is Elongation factor P from Geobacillus kaustophilus (strain HTA426).